Reading from the N-terminus, the 543-residue chain is Zinc finger protein tra-4 (543 aa).

Residues 1–38 (MDDPNQCTIKQEDSITRPRPTEAPTIQNLKQEPAIEEG) are disordered. Residues 10–20 (KQEDSITRPRP) are compositionally biased toward basic and acidic residues. 7 consecutive C2H2-type zinc fingers follow at residues 218–241 (VRCKKCKNRFIEKNIYERHLRDKH), 327–350 (PQCPFCDKRFRNEFSLKKHFAKKH), 381–406 (YVCFECTPIRNLCTDNRLLNHRKKFH), 413–436 (FRCSFCNMKFLTPRKLRKHKKMSH), 442–464 (FQCHFCEEIFISEVAVMTHERMH), 470–493 (FECKVCDFRANRYTAMEEHKRDEH), and 495–518 (YVCAICHERHAEYPEMKHHVYEEH).

It belongs to the krueppel C2H2-type zinc-finger protein family. Interacts with histone deacetylase hda-1. May interact with nasp-1.

The protein resides in the nucleus. Its function is as follows. Probable transcription factor. Promotes normal hermaphrodite (XX) development, in concert with histone deacetylase hda-1 and nasp-1, perhaps as components of a complex. May cooperate with transcription factor tra-1 to repress male-specific genes in hermaphrodites. Synthetic multivulva (synMuv) class B protein, required to repress the induction of vulval development by let-60 Ras signaling. This Caenorhabditis elegans protein is Zinc finger protein tra-4.